The following is a 160-amino-acid chain: Transcription antitermination protein NusB (160 aa).

It belongs to the NusB family.

In terms of biological role, involved in transcription antitermination. Required for transcription of ribosomal RNA (rRNA) genes. Binds specifically to the boxA antiterminator sequence of the ribosomal RNA (rrn) operons. This is Transcription antitermination protein NusB from Maricaulis maris (strain MCS10) (Caulobacter maris).